Reading from the N-terminus, the 350-residue chain is Transcriptional activator hacA (350 aa).

The tract at residues 1–118 is disordered; sequence MKSADRFSPV…RLEMEKLESE (118 aa). Residues 35–47 show a composition bias toward polar residues; the sequence is PADTSLQTKNVVA. Basic and acidic residues-rich tracts occupy residues 81-95 and 104-118; these read KTED…ERVL and SRER…LESE. The bZIP domain maps to 87–150; that stretch reads EQRRIERVLR…NRLSQQVAQL (64 aa). The segment at 89–142 is basic motif; the sequence is RRIERVLRNRAAAQTSRERKRLEMEKLESEKIDMEQQNQFLLQRLAQMEAENNR. Residues 143–150 form a leucine-zipper region; the sequence is LSQQVAQL. Disordered stretches follow at residues 152 to 175, 194 to 218, and 328 to 350; these read AEVR…PTLT, PTPS…DLTQ, and SLQP…AGSA. The span at 160 to 175 shows a compositional bias: low complexity; it reads STPTSSSPASVSPTLT. Polar residues-rich tracts occupy residues 196-211 and 329-340; these read PSVT…SSLA and LQPSHGASTSRC.

This sequence belongs to the bZIP family. Homodimer.

It is found in the nucleus. In terms of biological role, transcriptional activator involved in the unfolded protein response (UPR) pathway. Recognizes and binds to the UPR element (UPRE) in the promoter of UPR-regulated genes. Increases the synthesis of endoplasmic reticulum-resident proteins required for protein folding as well as components of the secretory pathway. The chain is Transcriptional activator hacA (hacA) from Emericella nidulans (strain FGSC A4 / ATCC 38163 / CBS 112.46 / NRRL 194 / M139) (Aspergillus nidulans).